The sequence spans 105 residues: Guanyl-specific ribonuclease Ms (105 aa).

Cystine bridges form between cysteine 3-cysteine 11 and cysteine 7-cysteine 102. Histidine 39 is an active-site residue. Glutamate 57 functions as the Proton acceptor in the catalytic mechanism. The active-site Proton donor is the histidine 91.

Belongs to the ribonuclease N1/T1 family.

It carries out the reaction [RNA] containing guanosine + H2O = an [RNA fragment]-3'-guanosine-3'-phosphate + a 5'-hydroxy-ribonucleotide-3'-[RNA fragment].. This is Guanyl-specific ribonuclease Ms from Aspergillus phoenicis (Aspergillus saitoi).